The following is a 503-amino-acid chain: Mitochondrial antiviral-signaling protein (503 aa).

The Cytoplasmic segment spans residues 1 to 478 (MTFAEDKTYK…HCASSMPWAK (478 aa)). Glycyl lysine isopeptide (Lys-Gly) (interchain with G-Cter in ubiquitin) cross-links involve residues Lys-7 and Lys-10. Residues 10–77 (KYIRDNHSKF…WVEVFIRALQ (68 aa)) form the CARD domain. A required for interaction with NLRX1 region spans residues 10–77 (KYIRDNHSKF…WVEVFIRALQ (68 aa)). Cys-79 is lipidated: S-palmitoyl cysteine. The disordered stretch occupies residues 119-202 (GPSAFAPGHN…HQEQEPELGG (84 aa)). Residues 143-147 (PVQDT) form an interaction with TRAF2 region. The span at 145-166 (QDTQPPESPVENSEQLLQTNSG) shows a compositional bias: polar residues. Phosphoserine occurs at positions 152, 157, 172, 186, and 220. Positions 153 to 158 (PVENSE) are interaction with TRAF6 1. Positions 178 to 189 (PSPNQQALSPQP) are enriched in polar residues. Position 234 is an asymmetric dimethylarginine (Arg-234). Ser-251 and Ser-256 each carry phosphoserine. A Glycyl lysine isopeptide (Lys-Gly) (interchain with G-Cter in ubiquitin) cross-link involves residue Lys-302. The interaction with DHX33 stretch occupies residues 337–503 (PSRVPASVAK…MLYRSRRLAQ (167 aa)). Residues 346–398 (KAPANTIPPERNSKQAKETPEGPATKVTTGGNQTGPNSSIRSLHSGPEMSKPG) are disordered. Residues 356 to 365 (RNSKQAKETP) are compositionally biased toward basic and acidic residues. Positions 371 to 387 (KVTTGGNQTGPNSSIRS) are enriched in polar residues. Phosphoserine is present on Ser-384. Positions 415–418 (LAIS) match the pLxIS motif motif. Ser-418 carries the phosphoserine; by TBK1 modification. Residues 431–436 (PEENEY) form an interaction with TRAF6 2 region. The segment at 446–466 (SPSADLLGSPEPLATQQPQEE) is disordered. Residues 479 to 496 (WLGATSALLAVFLAVMLY) form a helical membrane-spanning segment. At 497–503 (RSRRLAQ) the chain is on the mitochondrial intermembrane side.

Self-associates and polymerizes (via CARD domains) to form 400 nM long three-stranded helical filaments on mitochondria, filament nucleation requires interaction with RIGI whose CARD domains act as a template for filament assembly. Interacts with RIGI, IFIH1/MDA5, TRAF2, TRAF6 and C1QBP. May interact with FADD, RIPK1, IKBKE, CHUK and IKBKB. Interacts (when phosphorylated) with IRF3; following activation and phosphorylation on the pLxIS motif by TBK1, recruits IRF3. Interacts with NLRX1. Interaction with NLRX1 requires the CARD domain. Interacts with PSMA7. Interacts with TRAFD1. Interacts (via C-terminus) with PCBP2 in a complex containing MAVS/IPS1, PCBP2 and ITCH. Interacts with CYLD. Interacts with SRC. Interacts with DHX58/LGP2 and IKBKE. Interacts with STING1. Interacts with IFIT3 (via N-terminus). Interacts with TBK1 only in the presence of IFIT3. Interacts with TTLL12; the interaction prevents MAVS binding to TBK1 and IKBKE. Interacts with MUL1. Interacts with ANKRD17. Interacts with NDFIP1. Interacts with SMURF1; the interaction is mediated by NDFIP1 and leads to MAVS ubiquitination and degradation. Interacts (via C-terminus) with GPATCH3; the interaction is markedly increased upon viral infection. Directly interacts (via CARD domain) with ATG5 and ATG12, either as ATG5 and ATG12 monomers or as ATG12-ATG5 conjugates. Interacts with DHX33 (via the helicase C-terminal domain). Interacts with DDX3X (via C-terminus); this interaction may occur rapidly, but transiently after viral infection. The interaction with DDX3X potentiates MAVS-mediated IFNB induction. Conversely inhibition of this interaction prevents MAVS-mediated IFNB induction. Transiently interacts with TRAF3 early during viral infection. Interacts with CLPB. Interacts with TRAF3IP3. Interacts with TOMM70; the interaction is enhanced by virus infection. Interacts with ZNFX1. Interacts with DHX15. Interacts with N4BP3; this interaction promotes the polyubiquitination of MAVS. Interacts with TAX1BP1; this interaction induces MAVS polyubiquitination. Interacts with NLRP3; promoting NLRP3 recruitment to mitochondria and activation of the NLRP3 inflammasome. Interacts with ECSIT; this interaction bridges RIGI to the MAVS complex at the mitochondrion. Interacts with UBL7; this interaction promotes MAVS 'Lys-27'-linked ubiquitination leading to type I interferon production. Interacts (via transmembrane domain) with SMIM30/MAVI1 (via transmembrane domain); the interaction disrupts MAVS interaction with RIGI and inhibits MAVS aggregation, resulting in the repression of type I interferon signaling and innate immune responses. Following activation, phosphorylated by TBK1 at Ser-418 in the pLxIS motif. The phosphorylated pLxIS motif constitutes an IRF3-binding motif, leading to recruitment of the transcription factor IRF3 to induce type-I interferons and other cytokines. In terms of processing, ubiquitinated. Undergoes 'Lys-48'-linked polyubiquitination catalyzed by ITCH; ITCH-dependent polyubiquitination is mediated by the interaction with PCBP2 and leads to MAVS/IPS1 proteasomal degradation. Ubiquitinated by RNF125, leading to its degradation by the proteasome. Undergoes 'Lys-48'-linked ubiquitination catalyzed by SMURF1. Undergoes 'Lys-48'-linked ubiquitination catalyzed by MARCHF5 at Lys-7, leading to proteasomal degradation. Ubiquitinated via 'Lys-63'-linked ubiquitination at Lys-10 by TRIM31, promoting MAVS polymerization and formation of three-stranded helical filaments on mitochondria. Undergoes 'Lys-63'-linked ubiquitination leading to enhanced interaction between MAVS and TRAF2. Undergoes 'Lys-27'-linked ubiquitination by UBE2N and TRIM21 leading to enhanced interaction between MAVS and TBK1. Deubiquitinated by USP10 leading to attenuation of RIGI-mediated MAVS aggregation and production of type I interferon. Undergoes 'Lys-48'-linked polyubiquitination catalyzed by RNF115 leading to its degradation. Post-translationally, proteolytically cleaved by apoptotic caspases during apoptosis, leading to its inactivation. Cleavage by CASP3 during virus-induced apoptosis inactivates it, preventing cytokine overproduction. Palmitoylated by ZHDDC4. Palmitoylation promotes MAVS stabilization and activation by inhibiting 'Lys-48'- but facilitating 'Lys-63'-linked ubiquitination.

The protein localises to the mitochondrion outer membrane. It localises to the mitochondrion. The protein resides in the peroxisome. In terms of biological role, adapter required for innate immune defense against viruses. Acts downstream of DHX33, RIGI and IFIH1/MDA5, which detect intracellular dsRNA produced during viral replication, to coordinate pathways leading to the activation of NF-kappa-B, IRF3 and IRF7, and to the subsequent induction of antiviral cytokines such as IFN-beta and RANTES (CCL5). Peroxisomal and mitochondrial MAVS act sequentially to create an antiviral cellular state. Upon viral infection, peroxisomal MAVS induces the rapid interferon-independent expression of defense factors that provide short-term protection, whereas mitochondrial MAVS activates an interferon-dependent signaling pathway with delayed kinetics, which amplifies and stabilizes the antiviral response. May activate the same pathways following detection of extracellular dsRNA by TLR3. May protect cells from apoptosis. Involved in NLRP3 inflammasome activation by mediating NLRP3 recruitment to mitochondria. This chain is Mitochondrial antiviral-signaling protein, found in Mus musculus (Mouse).